Reading from the N-terminus, the 248-residue chain is 2,3-bisphosphoglycerate-dependent phosphoglycerate mutase (248 aa).

Substrate-binding positions include Arg-8 to Asn-15, Thr-21 to Gly-22, Arg-60, Glu-87 to Tyr-90, Lys-98, Arg-114 to Arg-115, and Gly-183 to Asn-184. His-9 serves as the catalytic Tele-phosphohistidine intermediate. The Proton donor/acceptor role is filled by Glu-87.

The protein belongs to the phosphoglycerate mutase family. BPG-dependent PGAM subfamily. As to quaternary structure, homodimer.

The enzyme catalyses (2R)-2-phosphoglycerate = (2R)-3-phosphoglycerate. The protein operates within carbohydrate degradation; glycolysis; pyruvate from D-glyceraldehyde 3-phosphate: step 3/5. Catalyzes the interconversion of 2-phosphoglycerate and 3-phosphoglycerate. The polypeptide is 2,3-bisphosphoglycerate-dependent phosphoglycerate mutase (Paraburkholderia phytofirmans (strain DSM 17436 / LMG 22146 / PsJN) (Burkholderia phytofirmans)).